The following is a 265-amino-acid chain: Undecaprenyl-diphosphatase (265 aa).

The next 7 membrane-spanning stretches (helical) occupy residues 42–62, 90–110, 115–135, 160–182, 195–215, 222–242, and 245–265; these read EAIP…IVYF, ISFL…LLLF, VEIS…VTGI, VAQG…ALLL, FLMS…MGMV, IVGL…FLKV, and KVDF…TMFL.

Belongs to the UppP family.

It is found in the cell membrane. The enzyme catalyses di-trans,octa-cis-undecaprenyl diphosphate + H2O = di-trans,octa-cis-undecaprenyl phosphate + phosphate + H(+). Functionally, catalyzes the dephosphorylation of undecaprenyl diphosphate (UPP). The chain is Undecaprenyl-diphosphatase from Methanococcoides burtonii (strain DSM 6242 / NBRC 107633 / OCM 468 / ACE-M).